A 536-amino-acid chain; its full sequence is uncharacterized protein (536 aa).

The Radical SAM core domain occupies 163-394 (LDAYDSMSVQ…MNFIPTRPLE (232 aa)). [4Fe-4S] cluster is bound by residues Cys-177, Cys-181, and Cys-184.

[4Fe-4S] cluster is required as a cofactor.

This is an uncharacterized protein from Synechocystis sp. (strain ATCC 27184 / PCC 6803 / Kazusa).